Consider the following 125-residue polypeptide: Small ribosomal subunit protein mS41 (125 aa).

The transit peptide at 1–10 (MLSIFGCVRA) directs the protein to the mitochondrion. Residues 103-125 (SFFGGERNRKATVAKWRAEQRNK) are disordered.

The protein belongs to the mitochondrion-specific ribosomal protein mS41 family.

The protein localises to the mitochondrion. Its function is as follows. Involved in telomere length regulation. In Candida glabrata (strain ATCC 2001 / BCRC 20586 / JCM 3761 / NBRC 0622 / NRRL Y-65 / CBS 138) (Yeast), this protein is Small ribosomal subunit protein mS41 (FYV4).